The chain runs to 447 residues: UPF0210 protein LCK_00974 (447 aa).

The protein belongs to the UPF0210 family. As to quaternary structure, homodimer.

The sequence is that of UPF0210 protein LCK_00974 from Leuconostoc citreum (strain KM20).